Reading from the N-terminus, the 299-residue chain is ATP phosphoribosyltransferase (299 aa).

This sequence belongs to the ATP phosphoribosyltransferase family. Long subfamily. Requires Mg(2+) as cofactor.

Its subcellular location is the cytoplasm. The catalysed reaction is 1-(5-phospho-beta-D-ribosyl)-ATP + diphosphate = 5-phospho-alpha-D-ribose 1-diphosphate + ATP. The protein operates within amino-acid biosynthesis; L-histidine biosynthesis; L-histidine from 5-phospho-alpha-D-ribose 1-diphosphate: step 1/9. With respect to regulation, feedback inhibited by histidine. Functionally, catalyzes the condensation of ATP and 5-phosphoribose 1-diphosphate to form N'-(5'-phosphoribosyl)-ATP (PR-ATP). Has a crucial role in the pathway because the rate of histidine biosynthesis seems to be controlled primarily by regulation of HisG enzymatic activity. The chain is ATP phosphoribosyltransferase from Campylobacter jejuni subsp. doylei (strain ATCC BAA-1458 / RM4099 / 269.97).